The following is a 423-amino-acid chain: Serine hydroxymethyltransferase (423 aa).

Residues Leu-120 and 124 to 126 each bind (6S)-5,6,7,8-tetrahydrofolate; that span reads GHL. N6-(pyridoxal phosphate)lysine is present on Lys-229. A (6S)-5,6,7,8-tetrahydrofolate-binding site is contributed by 353–355; sequence SPF.

The protein belongs to the SHMT family. As to quaternary structure, homodimer. The cofactor is pyridoxal 5'-phosphate.

The protein resides in the cytoplasm. It carries out the reaction (6R)-5,10-methylene-5,6,7,8-tetrahydrofolate + glycine + H2O = (6S)-5,6,7,8-tetrahydrofolate + L-serine. It participates in one-carbon metabolism; tetrahydrofolate interconversion. Its pathway is amino-acid biosynthesis; glycine biosynthesis; glycine from L-serine: step 1/1. Functionally, catalyzes the reversible interconversion of serine and glycine with tetrahydrofolate (THF) serving as the one-carbon carrier. This reaction serves as the major source of one-carbon groups required for the biosynthesis of purines, thymidylate, methionine, and other important biomolecules. Also exhibits THF-independent aldolase activity toward beta-hydroxyamino acids, producing glycine and aldehydes, via a retro-aldol mechanism. The polypeptide is Serine hydroxymethyltransferase (Synechococcus sp. (strain RCC307)).